The sequence spans 121 residues: Basic phospholipase A2 homolog 2 (121 aa).

7 cysteine pairs are disulfide-bonded: C26–C115, C28–C44, C43–C95, C49–C121, C50–C88, C57–C81, and C75–C86. The segment at 105–117 is important for membrane-damaging activities in eukaryotes and bacteria; heparin-binding; that stretch reads KKYRYHLKPLCKK.

Belongs to the phospholipase A2 family. Group II subfamily. K49 sub-subfamily. Homodimer; non-covalently linked (probable alternative/compact dimer conformation in solution). In terms of tissue distribution, expressed by the venom gland.

It is found in the secreted. Its function is as follows. Snake venom phospholipase A2 homolog that lacks enzymatic activity. Is myotoxic and displays edema-inducing activities in mouse paw. Also displays cytotoxic activity against myotubes. A model of myotoxic mechanism has been proposed: an apo Lys49-PLA2 is activated by the entrance of a hydrophobic molecule (e.g. fatty acid) at the hydrophobic channel of the protein leading to a reorientation of a monomer. This reorientation causes a transition between 'inactive' to 'active' states, causing alignment of C-terminal and membrane-docking sites (MDoS) side-by-side and putting the membrane-disruption sites (MDiS) in the same plane, exposed to solvent and in a symmetric position for both monomers. The MDoS region stabilizes the toxin on membrane by the interaction of charged residues with phospholipid head groups. Subsequently, the MDiS region destabilizes the membrane with penetration of hydrophobic residues. This insertion causes a disorganization of the membrane, allowing an uncontrolled influx of ions (i.e. calcium and sodium), and eventually triggering irreversible intracellular alterations and cell death. This is Basic phospholipase A2 homolog 2 from Bothrops brazili (Brazil's lancehead).